Reading from the N-terminus, the 168-residue chain is Large ribosomal subunit protein uL10 (168 aa).

Belongs to the universal ribosomal protein uL10 family. In terms of assembly, part of the ribosomal stalk of the 50S ribosomal subunit. The N-terminus interacts with L11 and the large rRNA to form the base of the stalk. The C-terminus forms an elongated spine to which L12 dimers bind in a sequential fashion forming a multimeric L10(L12)X complex.

Its function is as follows. Forms part of the ribosomal stalk, playing a central role in the interaction of the ribosome with GTP-bound translation factors. The chain is Large ribosomal subunit protein uL10 from Photorhabdus laumondii subsp. laumondii (strain DSM 15139 / CIP 105565 / TT01) (Photorhabdus luminescens subsp. laumondii).